We begin with the raw amino-acid sequence, 147 residues long: NADH-quinone oxidoreductase subunit A (147 aa).

A run of 3 helical transmembrane segments spans residues 16-36 (FAIF…GGWF), 68-88 (FYLV…LFAW), and 98-118 (VGFV…VYLV).

The protein belongs to the complex I subunit 3 family. NDH-1 is composed of 13 different subunits. Subunits NuoA, H, J, K, L, M, N constitute the membrane sector of the complex.

It localises to the cell inner membrane. It catalyses the reaction a quinone + NADH + 5 H(+)(in) = a quinol + NAD(+) + 4 H(+)(out). NDH-1 shuttles electrons from NADH, via FMN and iron-sulfur (Fe-S) centers, to quinones in the respiratory chain. The immediate electron acceptor for the enzyme in this species is believed to be ubiquinone. Couples the redox reaction to proton translocation (for every two electrons transferred, four hydrogen ions are translocated across the cytoplasmic membrane), and thus conserves the redox energy in a proton gradient. The protein is NADH-quinone oxidoreductase subunit A of Citrobacter koseri (strain ATCC BAA-895 / CDC 4225-83 / SGSC4696).